A 172-amino-acid chain; its full sequence is Large ribosomal subunit protein uL10 (172 aa).

This sequence belongs to the universal ribosomal protein uL10 family. In terms of assembly, part of the ribosomal stalk of the 50S ribosomal subunit. The N-terminus interacts with L11 and the large rRNA to form the base of the stalk. The C-terminus forms an elongated spine to which L12 dimers bind in a sequential fashion forming a multimeric L10(L12)X complex.

Forms part of the ribosomal stalk, playing a central role in the interaction of the ribosome with GTP-bound translation factors. This chain is Large ribosomal subunit protein uL10, found in Clostridium tetani (strain Massachusetts / E88).